The sequence spans 914 residues: Probable dipeptidyl-aminopeptidase B (914 aa).

A disordered region spans residues 1 to 82 (MGAEKRINDE…GLPPPSGAQR (82 aa)). The Cytoplasmic portion of the chain corresponds to 1 to 88 (MGAEKRINDE…GAQRTPKKVS (88 aa)). Low complexity predominate over residues 26–38 (DSTSTASISLALI). A helical; Signal-anchor for type II membrane protein transmembrane segment spans residues 89-109 (IIFWLVAALCVGGWLVAFFVF). Over 110–914 (MGSPKKDSDK…RSLLKRMSNA (805 aa)) the chain is Vacuolar. N-linked (GlcNAc...) asparagine glycosylation is found at Asn-128, Asn-295, Asn-347, and Asn-617. Catalysis depends on Ser-751, which acts as the Charge relay system. An N-linked (GlcNAc...) asparagine glycan is attached at Asn-810. Catalysis depends on charge relay system residues Asp-828 and His-861. A glycan (N-linked (GlcNAc...) asparagine) is linked at Asn-897.

The protein belongs to the peptidase S9B family.

It localises to the vacuole membrane. It carries out the reaction Release of an N-terminal dipeptide, Xaa-Yaa-|-Zaa-, from a polypeptide, preferentially when Yaa is Pro, provided Zaa is neither Pro nor hydroxyproline.. Functionally, type IV dipeptidyl-peptidase which removes N-terminal dipeptides sequentially from polypeptides having unsubstituted N-termini provided that the penultimate residue is proline. The chain is Probable dipeptidyl-aminopeptidase B (DAPB) from Uncinocarpus reesii (strain UAMH 1704).